The chain runs to 234 residues: MQHFWVVGTDTDVGKTFVTTLLMRNLQKQGVRVTPYKPVQTGEVYDGEQAYYFDTAMYEKYSLQLLDRENLNGYSFKEAASPHFAAQLEGQQIDTQQLLKQMQLLQQTWDVVICEGAGGLFVPLDACGETTLLDVIVESKLPVVVVTRTALGTINHTLLTLEALTTRKIEVLGLVFNGDMGSRMEQDNIQTILQYYTLPYMTIPKLEELSDINEYAITGTSLFERLIRRETSIN.

12-17 (DVGKTF) is an ATP binding site. Thr-16 provides a ligand contact to Mg(2+). Lys-37 is an active-site residue. Substrate is bound at residue Thr-41. Residues Asp-54 and 115–118 (EGAG) each bind ATP. Asp-54 and Glu-115 together coordinate Mg(2+).

Belongs to the dethiobiotin synthetase family. Homodimer. The cofactor is Mg(2+).

The protein resides in the cytoplasm. The enzyme catalyses (7R,8S)-7,8-diammoniononanoate + CO2 + ATP = (4R,5S)-dethiobiotin + ADP + phosphate + 3 H(+). Its pathway is cofactor biosynthesis; biotin biosynthesis; biotin from 7,8-diaminononanoate: step 1/2. Catalyzes a mechanistically unusual reaction, the ATP-dependent insertion of CO2 between the N7 and N8 nitrogen atoms of 7,8-diaminopelargonic acid (DAPA, also called 7,8-diammoniononanoate) to form a ureido ring. This Lysinibacillus sphaericus (Bacillus sphaericus) protein is ATP-dependent dethiobiotin synthetase BioD.